The chain runs to 198 residues: Na(+)-translocating NADH-quinone reductase subunit E (198 aa).

Helical transmembrane passes span 11-31 (SVFI…FLAV), 35-55 (VSTA…SVPV), 77-97 (FLNF…LEMI), 110-130 (GIFL…SFMV), 140-160 (IVYG…LAGI), and 176-196 (LGIT…FSGV).

The protein belongs to the NqrDE/RnfAE family. Composed of six subunits; NqrA, NqrB, NqrC, NqrD, NqrE and NqrF.

It is found in the cell inner membrane. It catalyses the reaction a ubiquinone + n Na(+)(in) + NADH + H(+) = a ubiquinol + n Na(+)(out) + NAD(+). NQR complex catalyzes the reduction of ubiquinone-1 to ubiquinol by two successive reactions, coupled with the transport of Na(+) ions from the cytoplasm to the periplasm. NqrA to NqrE are probably involved in the second step, the conversion of ubisemiquinone to ubiquinol. This Histophilus somni (strain 2336) (Haemophilus somnus) protein is Na(+)-translocating NADH-quinone reductase subunit E.